Here is a 141-residue protein sequence, read N- to C-terminus: Protein X (141 aa).

Positions 25–48 (SSGPSFPRPAAGSAASSASSPSPS) are enriched in low complexity. A disordered region spans residues 25 to 52 (SSGPSFPRPAAGSAASSASSPSPSDESD). The interval 68–113 (PCCLVFTCADLRTMDSTVNFVSWHANRQLGMPSKDLWTPYIKDQLL) is mitochondrial targeting sequence.

This sequence belongs to the orthohepadnavirus protein X family. As to quaternary structure, may form homodimer. May interact with host CEBPA, CFLAR, CREB1, DDB1, E4F1, HBXIP, HSPD1/HSP60, NFKBIA, POLR2E and SMAD4. Interacts with host SMC5-SMC6 complex and induces its degradation. Interacts with host TRPC4AP; leading to prevent ubiquitination of TRPC4AP. Interacts with host PLSCR1; this interaction promotes ubiquitination and degradation of HBx and impairs HBx-mediated cell proliferation. A fraction may be phosphorylated in insect cells and HepG2 cells, a human hepatoblastoma cell line. Phosphorylated in vitro by host protein kinase C or mitogen-activated protein kinase. N-acetylated in insect cells.

It is found in the host cytoplasm. It localises to the host nucleus. The protein resides in the host mitochondrion. Functionally, multifunctional protein that plays a role in silencing host antiviral defenses and promoting viral transcription. Does not seem to be essential for HBV infection. May be directly involved in development of cirrhosis and liver cancer (hepatocellular carcinoma). Most of cytosolic activities involve modulation of cytosolic calcium. The effect on apoptosis is controversial depending on the cell types in which the studies have been conducted. May induce apoptosis by localizing in mitochondria and causing loss of mitochondrial membrane potential. May also modulate apoptosis by binding host CFLAR, a key regulator of the death-inducing signaling complex (DISC). Promotes viral transcription by using the host E3 ubiquitin ligase DDB1 to target the SMC5-SMC6 complex to proteasomal degradation. This host complex would otherwise bind to viral episomal DNA, and prevents its transcription. Moderately stimulates transcription of many different viral and cellular transcription elements. Promoters and enhancers stimulated by HBx contain DNA binding sites for NF-kappa-B, AP-1, AP-2, c-EBP, ATF/CREB, or the calcium-activated factor NF-AT. The sequence is that of Protein X from Marmota monax (Woodchuck).